The sequence spans 402 residues: Iripin-8 (402 aa).

A signal peptide spans 1–16 (MTRLLWLFAAITASLA). Asparagine 164 and asparagine 230 each carry an N-linked (GlcNAc...) asparagine glycan.

The protein belongs to the serpin family. In terms of assembly, interacts with host thrombin/F2. Interacts with host coagulation factor VII/F7 (activated). Interacts with host coagulation factor X/F10 (activated). Interacts with host coagulation factor XII/F12 (activated). Interacts with host coagulation factor IX/F9 (activated). Interacts with host plasmin/PLG. Interacts with host protein C/PROC (activated). In terms of tissue distribution, saliva (at protein level). Salivary gland. Midgut. Low-level expression in ovary.

The protein localises to the secreted. In terms of biological role, serine protease inhibitor that modulates blood feeding of ticks on vertebrate species. Inhibits the intrinsic and common pathways of blood coagulation in the host. Inhibits host thrombin, factor VIIa, factor Xa, factor XIa, factor XIIa, plasmin and activated protein C. Inhibits host trypsin and kallikrein. Reduces host complement activity. Does not affect proliferation of CD4+ T-cells and neutrophil migration. The chain is Iripin-8 from Ixodes ricinus (Common tick).